The sequence spans 175 residues: uncharacterized protein (175 aa).

A compositionally biased stretch (low complexity) spans Leu35–Asp56. Residues Leu35–Asn70 form a disordered region. 2 helical membrane passes run Ile106 to Tyr126 and Tyr132 to Phe152.

The protein localises to the membrane. This is an uncharacterized protein from Dictyostelium discoideum (Social amoeba).